The chain runs to 768 residues: Solute carrier family 45 member 4 (768 aa).

Residues 1–32 (MKMAPQNADPESMQVQELSVPLPDPQKAGGAE) form a disordered region. 6 helical membrane passes run 63–83 (EFCY…IGLP), 86–106 (YYSL…PLIG), 123–143 (ILAL…GSAI), 155–175 (PIGI…ADAT), 196–216 (LNIH…LGGL), and 233–253 (VLFF…LFSI). Disordered stretches follow at residues 259-284 (SPQQ…PAFP) and 379-419 (NEAK…RHAF). Ser424 and Ser454 each carry phosphoserine. Residues 460–489 (DMQKRQRQHRHRNQSGATTSSGDTESEEGE) are disordered. The span at 473–482 (QSGATTSSGD) shows a compositional bias: low complexity. Ser485 carries the phosphoserine modification. 6 helical membrane passes run 518 to 538 (TWFS…QVIF), 560 to 580 (MGCW…ALLQ), 592 to 612 (VIYV…AMFP), 614 to 634 (VYVA…ISYC), 666 to 686 (ILSC…GGVV), and 695 to 715 (IPMV…FLVI). Residues 726–768 (EQKGLSSPLAGEGRAGGNSEKPTVLKLTRKEGLQGPVETESVV) are disordered. Residue Ser732 is modified to Phosphoserine.

The protein belongs to the glycoside-pentoside-hexuronide (GPH) cation symporter transporter (TC 2.A.2) family.

It is found in the membrane. It carries out the reaction sucrose(out) + H(+)(out) = sucrose(in) + H(+)(in). Functionally, proton-associated sucrose transporter. May be able to transport also glucose and fructose. The sequence is that of Solute carrier family 45 member 4 from Homo sapiens (Human).